Reading from the N-terminus, the 91-residue chain is Large ribosomal subunit protein bL28 (91 aa).

It belongs to the bacterial ribosomal protein bL28 family.

In Protochlamydia amoebophila (strain UWE25), this protein is Large ribosomal subunit protein bL28.